Consider the following 219-residue polypeptide: MSALRLRNANTPAPELDELSDQTPSESRVLKRQMSMSQRAMSNTLTSAANLSNLLPTGTLLAFQLLTPVFTSNGVCDHATRFLTAVLLFLLAASCFVSSFTDSVKADDGTIYFGFVTFKGMWVVDYPDPSGLGLPDLAKYRMRFVDWIHATLSVLVFGAVALRDKYITDCFYPSPEAETKHVLDIVPVGVGVMCSLLFMVFPARRHGIGYLVTGSVDRR.

The tract at residues 1–24 (MSALRLRNANTPAPELDELSDQTP) is disordered. Transmembrane regions (helical) follow at residues 51–71 (LSNLLPTGTLLAFQLLTPVFT), 82–102 (FLTAVLLFLLAASCFVSSFTD), 142–162 (MRFVDWIHATLSVLVFGAVAL), and 182–202 (VLDIVPVGVGVMCSLLFMVFP).

It belongs to the plant DMP1 protein family.

It is found in the endoplasmic reticulum membrane. Functionally, involved in membrane remodeling. The protein is Protein DMP5 of Arabidopsis thaliana (Mouse-ear cress).